We begin with the raw amino-acid sequence, 297 residues long: Cell division protein ZipA (297 aa).

Methionine 1 is a topological domain (periplasmic). The chain crosses the membrane as a helical span at residues 2–22 (EIGLREWLILIGIIVIAGILF). At 23-297 (DGWRRMRGGK…FERRALTQKR (275 aa)) the chain is on the cytoplasmic side. Positions 48 to 151 (DEEGGSAEVL…AAPASNSVKE (104 aa)) are disordered. The span at 83–92 (ARDREREPKP) shows a compositional bias: basic and acidic residues. Positions 124–133 (LFSDSDDDFA) are enriched in acidic residues.

This sequence belongs to the ZipA family. In terms of assembly, interacts with FtsZ via their C-terminal domains.

Its subcellular location is the cell inner membrane. In terms of biological role, essential cell division protein that stabilizes the FtsZ protofilaments by cross-linking them and that serves as a cytoplasmic membrane anchor for the Z ring. Also required for the recruitment to the septal ring of downstream cell division proteins. This Pseudomonas putida (strain ATCC 47054 / DSM 6125 / CFBP 8728 / NCIMB 11950 / KT2440) protein is Cell division protein ZipA.